Consider the following 364-residue polypeptide: Selection and upkeep of intraepithelial T-cells protein 11 (364 aa).

The first 28 residues, 1-28, serve as a signal peptide directing secretion; that stretch reads MEPSASCLPGFFMVCILLKITVLTQVMS. The 90-residue stretch at 29–118 folds into the Ig-like V-type domain; that stretch reads LDIQINTQIP…TNQEKRRSII (90 aa). Topologically, residues 29-138 are extracellular; that stretch reads LDIQINTQIP…MSLMSNNLLY (110 aa). A disulfide bridge connects residues C48 and C102. The helical transmembrane segment at 139 to 159 threads the bilayer; it reads LGIYLIFILFLNFLKGILFCL. Over 160 to 186 the chain is Cytoplasmic; the sequence is TKRLVHFRKRMIKIKKVWSNKTRACCP. A helical transmembrane segment spans residues 187 to 207; it reads LIWEFLEIVLFIAFLPLYLMF. Residues 208 to 230 lie on the Extracellular side of the membrane; it reads RIRVFTLDEAHILYNNWLWKVCK. The chain crosses the membrane as a helical span at residues 231–251; that stretch reads TLIAMMILFTVLILFLLWTLN. Over 252 to 364 the chain is Cytoplasmic; sequence RYGKMPCLSS…LYSKLGNLTH (113 aa).

It belongs to the SKINT family. In terms of tissue distribution, expressed in skin and thymus.

The protein resides in the membrane. In terms of biological role, may act by engaging a cell surface molecule on immature T-cells in the embryonic thymus. This Mus musculus (Mouse) protein is Selection and upkeep of intraepithelial T-cells protein 11 (Skint11).